We begin with the raw amino-acid sequence, 938 residues long: ATP-dependent RNA helicase DDX42 (938 aa).

Over residues 1–18 (MNWNKGGPGTKRGFGFGG) the composition is skewed to gly residues. Residues 1–114 (MNWNKGGPGT…KPVDSDSDDD (114 aa)) form a disordered region. K5 carries the post-translational modification N6-acetyllysine. The residue at position 12 (R12) is an Omega-N-methylarginine. Over residues 35 to 52 (SHSAFGATSSSSGFGKSA) the composition is skewed to low complexity. Phosphoserine is present on S58. Positions 70-84 (DEENAYFEDEEEDSS) are enriched in acidic residues. Residues S96, S104, S109, and S111 each carry the phosphoserine modification. Residues 116-157 (LEAFMAEVEDQAARDMKRLEEKDKERKNVKGIRDDIEEEDDQ) are a coiled coil. The disordered stretch occupies residues 182–203 (EYDSDGNPIAPTKKIIDPLPPI). Position 185 is a phosphoserine (S185). The short motif at 253 to 281 (SSFAHFGFDEQLMHQIRKSEYTQPTPIQC) is the Q motif element. The Helicase ATP-binding domain occupies 284–459 (VPVALSGRDM…RDILIDPIRV (176 aa)). Position 297 to 304 (297 to 304 (AKTGSGKT)) interacts with ATP. A DEAD box motif is present at residues 407-410 (DEAD). A Helicase C-terminal domain is found at 487–632 (WLTRRLVEFT…HVSKELLDLA (146 aa)). Polar residues-rich tracts occupy residues 737 to 757 (LNSV…SPVT) and 786 to 798 (GVNN…NSRE). The disordered stretch occupies residues 737 to 938 (LNSVPTNSAQ…PKRKKSRWDS (202 aa)). The interval 738 to 833 (NSVPTNSAQQ…TGNRHSDSPR (96 aa)) is necessary for interaction with TP53BP2. The residue at position 754 (S754) is a Phosphoserine. Positions 820–920 (SHGETGNRHS…KVDSKTDKTA (101 aa)) are enriched in basic and acidic residues. A Glycyl lysine isopeptide (Lys-Gly) (interchain with G-Cter in SUMO2) cross-link involves residue K899.

It belongs to the DEAD box helicase family. DDX42 subfamily. As to quaternary structure, transient component of the SF3B subcomplex of the 17S U2 SnRNP complex. Interacts (via the C-terminus) with TP53BP2; the interaction is not inhibitied by TP53BP2 ubiquitination and is independent of p53/TP53. In terms of tissue distribution, expressed in several cell lines (at protein level). Expressed in liver, lung, tonsil, thymus, muscle and pancreatic islets.

It localises to the cytoplasm. The protein localises to the nucleus. Its subcellular location is the cajal body. The protein resides in the nucleus speckle. It catalyses the reaction ATP + H2O = ADP + phosphate + H(+). Functionally, ATP-dependent RNA helicase that binds to partially double-stranded RNAs (dsRNAs) in order to unwind RNA secondary structures. Unwinding is promoted in the presence of single-strand binding proteins. Also mediates RNA duplex formation thereby displacing the single-strand RNA binding protein. ATP and ADP modulate its activity: ATP binding and hydrolysis by DDX42 triggers RNA strand separation, whereas the ADP-bound form of the protein triggers annealing of complementary RNA strands. Required for assembly of the 17S U2 SnRNP complex of the spliceosome, a large ribonucleoprotein complex that removes introns from transcribed pre-mRNAs: DDX42 associates transiently with the SF3B subcomplex of the 17S U2 SnRNP complex and is released after fulfilling its role in the assembly of 17S U2 SnRNP. Involved in the survival of cells by interacting with TP53BP2 and thereby counteracting the apoptosis-stimulating activity of TP53BP2. Relocalizes TP53BP2 to the cytoplasm. This Homo sapiens (Human) protein is ATP-dependent RNA helicase DDX42.